Consider the following 985-residue polypeptide: DNA polymerase (985 aa).

Positions 936–972 (APSASDASGKRARKGAAPSDDESGSSEDEDAPCEPKC) are disordered. Residues 954–967 (SDDESGSSEDEDAP) are compositionally biased toward acidic residues.

The protein belongs to the DNA polymerase type-B family.

The enzyme catalyses DNA(n) + a 2'-deoxyribonucleoside 5'-triphosphate = DNA(n+1) + diphosphate. Functionally, replicates the viral genome, host DNA polymerases cannot substitute for the viral enzyme in this process. The protein is DNA polymerase (POL) of Orgyia pseudotsugata (Douglas-fir tussock moth).